Reading from the N-terminus, the 284-residue chain is Lipoyl synthase (284 aa).

[4Fe-4S] cluster is bound by residues C36, C41, C47, C62, C66, C69, and S273. A Radical SAM core domain is found at 48–262 (WGKGTATFMI…RTIGLKKGFR (215 aa)).

This sequence belongs to the radical SAM superfamily. Lipoyl synthase family. The cofactor is [4Fe-4S] cluster.

Its subcellular location is the cytoplasm. It carries out the reaction [[Fe-S] cluster scaffold protein carrying a second [4Fe-4S](2+) cluster] + N(6)-octanoyl-L-lysyl-[protein] + 2 oxidized [2Fe-2S]-[ferredoxin] + 2 S-adenosyl-L-methionine + 4 H(+) = [[Fe-S] cluster scaffold protein] + N(6)-[(R)-dihydrolipoyl]-L-lysyl-[protein] + 4 Fe(3+) + 2 hydrogen sulfide + 2 5'-deoxyadenosine + 2 L-methionine + 2 reduced [2Fe-2S]-[ferredoxin]. It participates in protein modification; protein lipoylation via endogenous pathway; protein N(6)-(lipoyl)lysine from octanoyl-[acyl-carrier-protein]: step 2/2. Functionally, catalyzes the radical-mediated insertion of two sulfur atoms into the C-6 and C-8 positions of the octanoyl moiety bound to the lipoyl domains of lipoate-dependent enzymes, thereby converting the octanoylated domains into lipoylated derivatives. This chain is Lipoyl synthase, found in Phocaeicola vulgatus (strain ATCC 8482 / DSM 1447 / JCM 5826 / CCUG 4940 / NBRC 14291 / NCTC 11154) (Bacteroides vulgatus).